Consider the following 31-residue polypeptide: Photosystem I reaction center subunit XII (31 aa).

A helical transmembrane segment spans residues 7–26; the sequence is QVYVALVIALLPAVLAFRLS.

It belongs to the PsaM family.

Its subcellular location is the cellular thylakoid membrane. This Thermosynechococcus vestitus (strain NIES-2133 / IAM M-273 / BP-1) protein is Photosystem I reaction center subunit XII.